A 271-amino-acid polypeptide reads, in one-letter code: Putative phosphoenolpyruvate synthase regulatory protein (271 aa).

Residue 152–159 (GVSRCGKT) participates in ADP binding.

This sequence belongs to the pyruvate, phosphate/water dikinase regulatory protein family. PSRP subfamily.

It carries out the reaction [pyruvate, water dikinase] + ADP = [pyruvate, water dikinase]-phosphate + AMP + H(+). The catalysed reaction is [pyruvate, water dikinase]-phosphate + phosphate + H(+) = [pyruvate, water dikinase] + diphosphate. Functionally, bifunctional serine/threonine kinase and phosphorylase involved in the regulation of the phosphoenolpyruvate synthase (PEPS) by catalyzing its phosphorylation/dephosphorylation. The chain is Putative phosphoenolpyruvate synthase regulatory protein from Legionella pneumophila (strain Paris).